The following is a 389-amino-acid chain: SH2 domain-containing protein 2A (389 aa).

The segment at 41–63 is disordered; that stretch reads AASPQAPEAASNTGNAERAEEVP. An SH2 domain is found at 95–186; it reads WFHGFITRRE…PYGETLTEPL (92 aa). Residues 190–295 are disordered; sequence TPEPAGLSLR…PIAFYAMGRG (106 aa). The segment covering 203-216 has biased composition (polar residues); the sequence is SNFGSKSQDPNPQY. Ser217 is subject to Phosphoserine. Short sequence motifs (SH3-binding) lie at residues 244 to 250 and 272 to 278; these read RPKPPIP and RPKPSNP. The span at 245-256 shows a compositional bias: pro residues; it reads PKPPIPAKPQLP. At Ser296 the chain carries Phosphoserine. The interval 324 to 389 is disordered; it reads KSWSRPVPGG…QAWLPLGPPQ (66 aa). Positions 337–348 are enriched in polar residues; that stretch reads GGSQLHSENSVI. Over residues 352–361 the composition is skewed to pro residues; sequence PPLPHQPPPA.

Interacts with KDR. Interacts with TXK and ITK. Phosphorylated on tyrosine residues. Expression limited to tissues of the immune system and, in particular, activated T-cells. Expressed in peripheral blood leukocytes, thymus and spleen. Much lower expression or undetectable, in brain, placenta, skeletal muscle, prostate, testis, ovary, small intestine, and colon. Expressed at low levels in unstimulated T-cells, but not expressed in normal resting or activated B-cells. According to PubMed:10692392, expression is not restricted to activated T-cells, but strongly expressed in blood cell lineages, the endothelium and other cell and tissue types, such as heart, lung, and liver.

It localises to the cytoplasm. In terms of biological role, could be a T-cell-specific adapter protein involved in the control of T-cell activation. May play a role in the CD4-p56-LCK-dependent signal transduction pathway. Could also play an important role in normal and pathological angiogenesis. Could be an adapter protein that facilitates and regulates interaction of KDR with effector proteins important to endothelial cell survival and proliferation. The polypeptide is SH2 domain-containing protein 2A (SH2D2A) (Homo sapiens (Human)).